A 263-amino-acid polypeptide reads, in one-letter code: Acyl-[acyl-carrier-protein]--UDP-N-acetylglucosamine O-acyltransferase (263 aa).

It belongs to the transferase hexapeptide repeat family. LpxA subfamily. As to quaternary structure, homotrimer.

Its subcellular location is the cytoplasm. The catalysed reaction is a (3R)-hydroxyacyl-[ACP] + UDP-N-acetyl-alpha-D-glucosamine = a UDP-3-O-[(3R)-3-hydroxyacyl]-N-acetyl-alpha-D-glucosamine + holo-[ACP]. It functions in the pathway glycolipid biosynthesis; lipid IV(A) biosynthesis; lipid IV(A) from (3R)-3-hydroxytetradecanoyl-[acyl-carrier-protein] and UDP-N-acetyl-alpha-D-glucosamine: step 1/6. Functionally, involved in the biosynthesis of lipid A, a phosphorylated glycolipid that anchors the lipopolysaccharide to the outer membrane of the cell. The chain is Acyl-[acyl-carrier-protein]--UDP-N-acetylglucosamine O-acyltransferase from Campylobacter lari (strain RM2100 / D67 / ATCC BAA-1060).